The primary structure comprises 699 residues: Elongation factor G (699 aa).

One can recognise a tr-type G domain in the interval 8-283; sequence EHIRNIGICA…AVVDFLPSPI (276 aa). GTP-binding positions include 17–24, 81–85, and 135–138; these read AHIDAGKT, DTPGH, and NKMD.

This sequence belongs to the TRAFAC class translation factor GTPase superfamily. Classic translation factor GTPase family. EF-G/EF-2 subfamily.

The protein localises to the cytoplasm. In terms of biological role, catalyzes the GTP-dependent ribosomal translocation step during translation elongation. During this step, the ribosome changes from the pre-translocational (PRE) to the post-translocational (POST) state as the newly formed A-site-bound peptidyl-tRNA and P-site-bound deacylated tRNA move to the P and E sites, respectively. Catalyzes the coordinated movement of the two tRNA molecules, the mRNA and conformational changes in the ribosome. The polypeptide is Elongation factor G (Rickettsia peacockii (strain Rustic)).